Consider the following 441-residue polypeptide: Inner kinetochore subunit mis17 (441 aa).

Polar residues predominate over residues 160–173 (SSILENSPPNKVQR). The tract at residues 160–240 (SSILENSPPN…TSSMAPRNLL (81 aa)) is disordered. Residues 174 to 183 (LSSLDSSQDS) show a composition bias toward low complexity. A compositionally biased stretch (polar residues) spans 192–201 (VTGTTFSSQA). A compositionally biased stretch (low complexity) spans 217 to 233 (SLTNQSSSLQSSLQTSS).

It belongs to the CENP-U/AME1 family. As to quaternary structure, component of the heterotetrameric kinetochore subcomplex COMA, which consists of fta2, fta7, mal2 and mis17. The COMA subcomplex is part of a larger constitutive centromere-associated network (CCAN) (also known as central kinetochore Sim4 complex in fission yeast), which is composed of at least cnl2, cnp3, cnp20, fta1, fta2, fta3, fta4, fta6, fta7, mal2, mhf1, mhf2, mis6, mis15, mis17, sim4 and wip1. Interacts with mis6 and mis15.

It localises to the nucleus. The protein localises to the chromosome. The protein resides in the centromere. It is found in the kinetochore. Its function is as follows. Component of the kinetochore, a multiprotein complex that assembles on centromeric DNA and attaches chromosomes to spindle microtubules, mediating chromosome segregation and sister chromatid segregation during meiosis and mitosis. Component of the inner kinetochore COMA complex, which connects centromere-associated proteins and the outer kinetochore. COMA interacts with other inner kinetochore proteins to form the inner kinetochore constitutive centromere-associated network (CCAN), which serves as a structural platform for outer kinetochore assembly. This Schizosaccharomyces pombe (strain 972 / ATCC 24843) (Fission yeast) protein is Inner kinetochore subunit mis17 (mis17).